A 373-amino-acid chain; its full sequence is XK-related protein 9 (373 aa).

Helical transmembrane passes span F8–V28, Y38–F58, A166–L186, I203–L223, L224–I244, C256–F276, V295–P315, and F318–V338.

The protein belongs to the XK family. Undergoes proteolytic processing by caspase-3 (CASP3), caspase-6 (CASP6) and caspase-7 (CASP7) to generate the XK-related protein 9, processed form, leading to its activation.

Its subcellular location is the cell membrane. The enzyme catalyses a 1,2-diacyl-sn-glycero-3-phospho-L-serine(in) = a 1,2-diacyl-sn-glycero-3-phospho-L-serine(out). Its activity is regulated as follows. Activated upon caspase cleavage to generate the XK-related protein 9, processed form. Does not act prior the onset of apoptosis. Functionally, phospholipid scramblase that promotes phosphatidylserine exposure on apoptotic cell surface. Phosphatidylserine is a specific marker only present at the surface of apoptotic cells and acts as a specific signal for engulfment. The protein is XK-related protein 9 of Homo sapiens (Human).